Reading from the N-terminus, the 392-residue chain is Putative nickel insertion protein (392 aa).

Belongs to the LarC family.

The polypeptide is Putative nickel insertion protein (Methanothrix thermoacetophila (strain DSM 6194 / JCM 14653 / NBRC 101360 / PT) (Methanosaeta thermophila)).